Here is an 811-residue protein sequence, read N- to C-terminus: Glycerol-3-phosphate acyltransferase (811 aa).

Positions 309 to 314 match the HXXXXD motif motif; that stretch reads CHRSHM.

The protein belongs to the GPAT/DAPAT family.

The protein localises to the cell inner membrane. It catalyses the reaction sn-glycerol 3-phosphate + an acyl-CoA = a 1-acyl-sn-glycero-3-phosphate + CoA. The protein operates within phospholipid metabolism; CDP-diacylglycerol biosynthesis; CDP-diacylglycerol from sn-glycerol 3-phosphate: step 1/3. This Colwellia psychrerythraea (strain 34H / ATCC BAA-681) (Vibrio psychroerythus) protein is Glycerol-3-phosphate acyltransferase.